Reading from the N-terminus, the 301-residue chain is UPF0282 protein Pcal_1546 (301 aa).

The protein belongs to the UPF0282 family.

The sequence is that of UPF0282 protein Pcal_1546 from Pyrobaculum calidifontis (strain DSM 21063 / JCM 11548 / VA1).